The sequence spans 414 residues: MRVGGAFHLLLVCLSPALLSAVRINGDGQEVLYLAEGDNVRLGCPYVLDPEDYGPNGLDIEWMQVNSDPAHHRENVFLSYQDKRINHGSLPHLQQRVRFAASDPSQYDASINLMNLQVSDTATYECRVKKTTMATRKVIVTVQARPAVPMCWTEGHMTYGNDVVLKCYASGGSQPLSYKWAKISGHHYPYRAGSYTSQHSYHSELSYQESFHSSINQGLNNGDLVLKDISRADDGLYQCTVANNVGYSVCVVEVKVSDSRRIGVIIGIVLGSLLALGCLAVGIWGLVCCCCGGSGAGGARGAFGYGNGGGVGGGACGDLASEIREDAVAPGCKASGRGSRVTHLLGYPTQNVSRSLRRKYAPPPCGGPEDVALAPCTAAAACEAGPSPVYVKVKSAEPADCAEGPVQCKNGLLV.

Positions 1 to 21 (MRVGGAFHLLLVCLSPALLSA) are cleaved as a signal peptide. Ig-like V-type domains are found at residues 22-141 (VRIN…VIVT) and 146-257 (PAVP…VKVS). The Extracellular portion of the chain corresponds to 22–263 (VRINGDGQEV…VKVSDSRRIG (242 aa)). Intrachain disulfides connect Cys44-Cys126 and Cys167-Cys239. The helical transmembrane segment at 264 to 284 (VIIGIVLGSLLALGCLAVGIW) threads the bilayer. Over 285-414 (GLVCCCCGGS…PVQCKNGLLV (130 aa)) the chain is Cytoplasmic.

It localises to the membrane. This Homo sapiens (Human) protein is V-set and immunoglobulin domain-containing protein 8.